The primary structure comprises 88 residues: Cell division topological specificity factor (88 aa).

Belongs to the MinE family.

Prevents the cell division inhibition by proteins MinC and MinD at internal division sites while permitting inhibition at polar sites. This ensures cell division at the proper site by restricting the formation of a division septum at the midpoint of the long axis of the cell. The protein is Cell division topological specificity factor of Acidovorax ebreus (strain TPSY) (Diaphorobacter sp. (strain TPSY)).